A 281-amino-acid chain; its full sequence is UPF0273 protein PAE3143 (281 aa).

In terms of domain architecture, KaiC spans 4-248 (PRVRSYVPGL…YIKITGSSVR (245 aa)). ATP is bound at residue 31 to 38 (GGPGTGKS).

The protein belongs to the UPF0273 family.

This chain is UPF0273 protein PAE3143, found in Pyrobaculum aerophilum (strain ATCC 51768 / DSM 7523 / JCM 9630 / CIP 104966 / NBRC 100827 / IM2).